We begin with the raw amino-acid sequence, 168 residues long: Peptidoglycan-associated lipoprotein (168 aa).

A signal peptide spans 1–24 (MGRIAALTRNPVMIALVAMLAIAG). Cysteine 25 is lipidated: N-palmitoyl cysteine. Cysteine 25 is lipidated: S-diacylglycerol cysteine. The OmpA-like domain maps to 50-167 (AQDFTVNIGD…RAVTTLSGAG (118 aa)).

The protein belongs to the Pal lipoprotein family. The Tol-Pal system is composed of five core proteins: the inner membrane proteins TolA, TolQ and TolR, the periplasmic protein TolB and the outer membrane protein Pal. They form a network linking the inner and outer membranes and the peptidoglycan layer.

The protein localises to the cell outer membrane. Part of the Tol-Pal system, which plays a role in outer membrane invagination during cell division and is important for maintaining outer membrane integrity. In Mesorhizobium japonicum (strain LMG 29417 / CECT 9101 / MAFF 303099) (Mesorhizobium loti (strain MAFF 303099)), this protein is Peptidoglycan-associated lipoprotein.